Reading from the N-terminus, the 201-residue chain is Superoxide dismutase [Mn] (201 aa).

Mn(2+) contacts are provided by histidine 27, histidine 81, aspartate 163, and histidine 167.

The protein belongs to the iron/manganese superoxide dismutase family. As to quaternary structure, homodimer. Mn(2+) serves as cofactor.

The protein localises to the secreted. The catalysed reaction is 2 superoxide + 2 H(+) = H2O2 + O2. Destroys superoxide anion radicals which are normally produced within the cells and which are toxic to biological systems. This chain is Superoxide dismutase [Mn] (sodA), found in Streptococcus pyogenes.